Here is a 1433-residue protein sequence, read N- to C-terminus: CAP-Gly domain-containing linker protein 1 (1433 aa).

A disordered region spans residues 1-51 (MSMLKPSGLKAPSKTIKHGSTLLKAPASVATAPAEKAPSSEKSSSTTTADA). Residues 32–49 (APAEKAPSSEKSSSTTTA) show a composition bias toward low complexity. The CAP-Gly 1 domain occupies 79 to 121 (GETQFAPGQWAGIVLDEPIGKNDGSVAGVRYFQCEPLRGIFTR). A disordered region spans residues 133–208 (DEANGTQTAH…VSNLSEAGSL (76 aa)). Over residues 140 to 168 (TAHASRATSPTSTSTASAVSASPAALLPS) the composition is skewed to low complexity. A compositionally biased stretch (polar residues) spans 184–204 (TPSQFSNLSKTASGSVSNLSE). Residues 235–277 (GETDFAKGEWCGVELDEPLGKNDGAVAGTRYFQCQPRYGLFAP) form the CAP-Gly 2 domain. A compositionally biased stretch (low complexity) spans 319–333 (SLSSVASSVSSKPSR). The interval 319–338 (SLSSVASSVSSKPSRTGLLT) is disordered. A coiled-coil region spans residues 351 to 1353 (TTALQEALKE…CEAALNGNEE (1003 aa)). The CCHC-type zinc finger occupies 1412 to 1429 (PYCDTCEMFGHWTADCND).

The protein localises to the cytoplasm. The protein resides in the cytoskeleton. Its subcellular location is the cytoplasmic vesicle membrane. It is found in the cell projection. It localises to the ruffle. In terms of biological role, binds to the plus end of microtubules and regulates the dynamics of the microtubule cytoskeleton. Promotes microtubule growth and microtubule bundling. Links cytoplasmic vesicles to microtubules and thereby plays an important role in intracellular vesicle trafficking. Plays a role macropinocytosis and endosome trafficking. This chain is CAP-Gly domain-containing linker protein 1 (CLIP1), found in Gallus gallus (Chicken).